Consider the following 324-residue polypeptide: MIFSKISQVAHYVPQQLVTNNDLASIMDTSHEWIFSRTGIAERHISRDEMTSDLAIQVADQLLTQSGLKADAIDFIIVATISPDATMPSTAAKVQAAIAATSAFAFDMTAACSGFVFALAMADKLIASGAYQNGMVIGAETLSKLVNWQDRATAVLFGDGAGGVLLEASKDKHVLAETLHTDGARCQSLISGETSLSSPYSIGKKAIATIQMDGRAIFDFAIRDVSKSILTLMAQSDITKDDIDYCLLHQANRRILDKIARKIDVPREKFLENMMRYGNTSAASIPILLSEAVQKGQIRLDGTQKILLSGFGGGLTWGSLIVKI.

Catalysis depends on residues Cys-112 and His-249. An ACP-binding region spans residues 250–254; the sequence is QANRR. Residue Asn-279 is part of the active site.

It belongs to the thiolase-like superfamily. FabH family. As to quaternary structure, homodimer.

Its subcellular location is the cytoplasm. It catalyses the reaction malonyl-[ACP] + acetyl-CoA + H(+) = 3-oxobutanoyl-[ACP] + CO2 + CoA. The protein operates within lipid metabolism; fatty acid biosynthesis. Catalyzes the condensation reaction of fatty acid synthesis by the addition to an acyl acceptor of two carbons from malonyl-ACP. Catalyzes the first condensation reaction which initiates fatty acid synthesis and may therefore play a role in governing the total rate of fatty acid production. Possesses both acetoacetyl-ACP synthase and acetyl transacylase activities. Its substrate specificity determines the biosynthesis of branched-chain and/or straight-chain of fatty acids. This Streptococcus pyogenes serotype M3 (strain ATCC BAA-595 / MGAS315) protein is Beta-ketoacyl-[acyl-carrier-protein] synthase III.